Here is a 347-residue protein sequence, read N- to C-terminus: Circulating cathodic antigen (347 aa).

Residues 76–109 are a coiled coil; it reads ICLAAENKQLEQLKIENKTLRNSLDEHQTALDMI. A disordered region spans residues 149 to 177; the sequence is PGPKSVNTPSTNSIDSQSVSQKSNSGKVD. Residues 153–174 show a composition bias toward polar residues; the sequence is SVNTPSTNSIDSQSVSQKSNSG. Positions 206-233 form a coiled coil; that stretch reads DAYATELEEELHRLRSENAGLREILMIS. Positions 303–332 are disordered; it reads LYNIPNPSDDSSNSGTISGNHSDEDSDEDD. The segment covering 307 to 316 has biased composition (low complexity); the sequence is PNPSDDSSNS.

Belongs to the SIKE family. Post-translationally, O-glycosylated.

Its function is as follows. Involved in protection of the schistosome gut. This is Circulating cathodic antigen from Schistosoma mansoni (Blood fluke).